A 90-amino-acid polypeptide reads, in one-letter code: Small ribosomal subunit protein bS16 (90 aa).

Belongs to the bacterial ribosomal protein bS16 family.

The polypeptide is Small ribosomal subunit protein bS16 (Bacillus licheniformis (strain ATCC 14580 / DSM 13 / JCM 2505 / CCUG 7422 / NBRC 12200 / NCIMB 9375 / NCTC 10341 / NRRL NRS-1264 / Gibson 46)).